The sequence spans 442 residues: Tryptophan synthase beta chain 2 (442 aa).

K122 carries the post-translational modification N6-(pyridoxal phosphate)lysine.

It belongs to the TrpB family. As to quaternary structure, tetramer of two alpha and two beta chains. It depends on pyridoxal 5'-phosphate as a cofactor.

It catalyses the reaction (1S,2R)-1-C-(indol-3-yl)glycerol 3-phosphate + L-serine = D-glyceraldehyde 3-phosphate + L-tryptophan + H2O. The protein operates within amino-acid biosynthesis; L-tryptophan biosynthesis; L-tryptophan from chorismate: step 5/5. Functionally, the beta subunit is responsible for the synthesis of L-tryptophan from indole and L-serine. The sequence is that of Tryptophan synthase beta chain 2 (trpB2) from Methanosarcina acetivorans (strain ATCC 35395 / DSM 2834 / JCM 12185 / C2A).